A 168-amino-acid chain; its full sequence is Protein A40 (168 aa).

Over 1–9 (MNKPKTDYA) the chain is Cytoplasmic. A helical; Signal-anchor for type II membrane protein membrane pass occupies residues 10-30 (GYACCVICGLIVGIIFTATLL). Residues 31–168 (KVVERKLVHT…TTFLSYHYFG (138 aa)) are Extracellular-facing. The C-type lectin domain maps to 63-168 (YNNKCIHLST…TTFLSYHYFG (106 aa)).

The protein belongs to the poxviridae A40 protein family.

The protein localises to the host membrane. The protein is Protein A40 of Homo sapiens (Human).